The chain runs to 510 residues: Global transcription regulator sge1 (510 aa).

3 disordered regions span residues 94–152 (PPGE…ASRN), 393–438 (HPFM…QQHS), and 469–510 (LGGT…MGRL). The span at 123–143 (NTGMNGTATGANAANLSSAGS) shows a compositional bias: low complexity. 2 stretches are compositionally biased toward polar residues: residues 471-480 (GTNTDQSQPF) and 501-510 (PGSNNSMGRL).

Belongs to the MIT1/WOR1 family.

It is found in the nucleus. Global transcriptional regulator of pathogenicity. Differentially regulates expression of effector genes. Also required for radial growth and production of asexual conidiospores, and plays a role in mycelium pigmentation. Not required for induction of Ave1, the effector that activates resistance mediated by the Ve1 immune receptor in tomato. This Verticillium dahliae (strain VdLs.17 / ATCC MYA-4575 / FGSC 10137) (Verticillium wilt) protein is Global transcription regulator sge1.